The sequence spans 263 residues: Taurine import ATP-binding protein TauB (263 aa).

An ABC transporter domain is found at 4-235 (LTAEAISLSF…RYAAGETVRS (232 aa)). 40 to 47 (GPSGCGKS) contacts ATP.

It belongs to the ABC transporter superfamily. Taurine importer (TC 3.A.1.17.1) family. As to quaternary structure, the complex is composed of two ATP-binding proteins (TauB), two transmembrane proteins (TauC) and a solute-binding protein (TauA).

Its subcellular location is the cell inner membrane. The catalysed reaction is taurine(out) + ATP + H2O = taurine(in) + ADP + phosphate + H(+). Functionally, part of the ABC transporter complex TauABC involved in taurine import. Responsible for energy coupling to the transport system. This Pseudomonas aeruginosa (strain ATCC 15692 / DSM 22644 / CIP 104116 / JCM 14847 / LMG 12228 / 1C / PRS 101 / PAO1) protein is Taurine import ATP-binding protein TauB.